The chain runs to 69 residues: UPF0337 protein XAC4007 (69 aa).

The protein belongs to the UPF0337 (CsbD) family.

This chain is UPF0337 protein XAC4007, found in Xanthomonas axonopodis pv. citri (strain 306).